The sequence spans 209 residues: tRNA (guanine-N(7)-)-methyltransferase (209 aa).

4 residues coordinate S-adenosyl-L-methionine: Asp35, Glu60, Asn87, and Asp113. Residue Asp113 is part of the active site. Substrate contacts are provided by Lys117 and Asp149.

The protein belongs to the class I-like SAM-binding methyltransferase superfamily. TrmB family.

The catalysed reaction is guanosine(46) in tRNA + S-adenosyl-L-methionine = N(7)-methylguanosine(46) in tRNA + S-adenosyl-L-homocysteine. It participates in tRNA modification; N(7)-methylguanine-tRNA biosynthesis. Catalyzes the formation of N(7)-methylguanine at position 46 (m7G46) in tRNA. The sequence is that of tRNA (guanine-N(7)-)-methyltransferase from Prochlorococcus marinus (strain AS9601).